Consider the following 143-residue polypeptide: Nucleoside diphosphate kinase (143 aa).

ATP-binding residues include lysine 11, phenylalanine 59, arginine 87, threonine 93, arginine 104, and asparagine 114. Histidine 117 (pros-phosphohistidine intermediate) is an active-site residue.

Belongs to the NDK family. In terms of assembly, homotetramer. It depends on Mg(2+) as a cofactor.

It is found in the cytoplasm. The catalysed reaction is a 2'-deoxyribonucleoside 5'-diphosphate + ATP = a 2'-deoxyribonucleoside 5'-triphosphate + ADP. The enzyme catalyses a ribonucleoside 5'-diphosphate + ATP = a ribonucleoside 5'-triphosphate + ADP. Major role in the synthesis of nucleoside triphosphates other than ATP. The ATP gamma phosphate is transferred to the NDP beta phosphate via a ping-pong mechanism, using a phosphorylated active-site intermediate. In Shewanella sediminis (strain HAW-EB3), this protein is Nucleoside diphosphate kinase.